We begin with the raw amino-acid sequence, 187 residues long: Elongation factor P (187 aa).

Belongs to the elongation factor P family.

It localises to the cytoplasm. Its pathway is protein biosynthesis; polypeptide chain elongation. Functionally, involved in peptide bond synthesis. Stimulates efficient translation and peptide-bond synthesis on native or reconstituted 70S ribosomes in vitro. Probably functions indirectly by altering the affinity of the ribosome for aminoacyl-tRNA, thus increasing their reactivity as acceptors for peptidyl transferase. In Treponema pallidum (strain Nichols), this protein is Elongation factor P (efp).